The sequence spans 531 residues: Apolipoprotein N-acyltransferase (531 aa).

Transmembrane regions (helical) follow at residues 8–28 (IILLSGVSRTFVGFLAGLLAV), 34–54 (FGIFAAAFVSFPVLVWLIDGV), 69–89 (PAAIGWSFGFGYFLGGLWWLG), 105–125 (LTVVGLPAVLGLFYALAVVIA), 136–156 (IAALALGFGIAEWLRGFLFTG), 178–198 (VVNLSTINMLAVFVFAAPALI), and 206–226 (AGLAIAAALFTAHVAFGFYRL). In terms of domain architecture, CN hydrolase spans 243-493 (VQPVIDQAKK…RGVIDTILPG (251 aa)). Catalysis depends on Glu-287, which acts as the Proton acceptor. Residue Lys-351 is part of the active site. Cys-405 (nucleophile) is an active-site residue. A helical transmembrane segment spans residues 507-527 (IFWLTTGILFLVAAISRLGFN).

Belongs to the CN hydrolase family. Apolipoprotein N-acyltransferase subfamily.

Its subcellular location is the cell inner membrane. The enzyme catalyses N-terminal S-1,2-diacyl-sn-glyceryl-L-cysteinyl-[lipoprotein] + a glycerophospholipid = N-acyl-S-1,2-diacyl-sn-glyceryl-L-cysteinyl-[lipoprotein] + a 2-acyl-sn-glycero-3-phospholipid + H(+). The protein operates within protein modification; lipoprotein biosynthesis (N-acyl transfer). In terms of biological role, catalyzes the phospholipid dependent N-acylation of the N-terminal cysteine of apolipoprotein, the last step in lipoprotein maturation. In Rhizobium meliloti (strain 1021) (Ensifer meliloti), this protein is Apolipoprotein N-acyltransferase.